The chain runs to 141 residues: Hemoglobin subunit alpha (141 aa).

In terms of domain architecture, Globin spans 1-141 (VLSSDDKCNV…VSSVLTSKYR (141 aa)). His-58 contributes to the O2 binding site. Residue His-87 participates in heme b binding.

It belongs to the globin family. In terms of assembly, heterotetramer of two alpha chains and two beta chains. Red blood cells.

Functionally, involved in oxygen transport from the lung to the various peripheral tissues. The chain is Hemoglobin subunit alpha (HBA) from Crocodylus niloticus (Nile crocodile).